The sequence spans 158 residues: uncharacterized protein (158 aa).

The tract at residues 1-26 (MRASRSPPSPRRCHHHHEATGAASGA) is disordered.

This is an uncharacterized protein from Homo sapiens (Human).